Here is a 294-residue protein sequence, read N- to C-terminus: Putative pyruvate, phosphate dikinase regulatory protein (294 aa).

156–163 (GVSRSGKT) contributes to the ADP binding site.

Belongs to the pyruvate, phosphate/water dikinase regulatory protein family. PDRP subfamily.

It carries out the reaction N(tele)-phospho-L-histidyl/L-threonyl-[pyruvate, phosphate dikinase] + ADP = N(tele)-phospho-L-histidyl/O-phospho-L-threonyl-[pyruvate, phosphate dikinase] + AMP + H(+). It catalyses the reaction N(tele)-phospho-L-histidyl/O-phospho-L-threonyl-[pyruvate, phosphate dikinase] + phosphate + H(+) = N(tele)-phospho-L-histidyl/L-threonyl-[pyruvate, phosphate dikinase] + diphosphate. In terms of biological role, bifunctional serine/threonine kinase and phosphorylase involved in the regulation of the pyruvate, phosphate dikinase (PPDK) by catalyzing its phosphorylation/dephosphorylation. The sequence is that of Putative pyruvate, phosphate dikinase regulatory protein from Cutibacterium acnes (strain DSM 16379 / KPA171202) (Propionibacterium acnes).